The primary structure comprises 83 residues: Large ribosomal subunit protein bL27 (83 aa).

Residues 1 to 22 form a disordered region; sequence MAHKKGQGSTRNGRDSHSKRLG.

Belongs to the bacterial ribosomal protein bL27 family.

This is Large ribosomal subunit protein bL27 from Protochlamydia amoebophila (strain UWE25).